Reading from the N-terminus, the 347-residue chain is MKLGISAYGAYVPQYRIKVEEIAKVWGDDADDYRNGLMVSEKSVPDVDEDTATIAVEAARNAIARGADPKKIGAIYVGSESHPYAVKPTATIVAAAIGAPNRMTAADFEFACKAGTAAIQTSMGVVASGLAETALAIGADTSQGAPGDALEYTAAAGGAAFVISKNDHIAVINHTCSFTSDTPDFWRREGADYPRHGGRFTGDPGYFKHVLSASRMMLECQGTKPSDYNYAVFHQPNGKFPTRAALTLGFKKEQLSPGLTCPMMGNTYSGASMVGLSAVLDIAKPGERIFVTSFGSGAGSDSFDITVTDRITEVQDLAPKTWDYIKKAKYLDYASYARHKGKINTDN.

Positions 29 and 30 each coordinate (3S)-3-hydroxy-3-methylglutaryl-CoA. Glutamate 80 acts as the Proton donor/acceptor in catalysis. 2 residues coordinate (3S)-3-hydroxy-3-methylglutaryl-CoA: cysteine 112 and threonine 153. The active-site Acyl-thioester intermediate is cysteine 112. Position 199 (arginine 199) interacts with CoA. 2 residues coordinate (3S)-3-hydroxy-3-methylglutaryl-CoA: threonine 201 and histidine 234. Histidine 234 serves as the catalytic Proton donor/acceptor. Residue lysine 239 participates in CoA binding. (3S)-3-hydroxy-3-methylglutaryl-CoA-binding residues include arginine 243, asparagine 266, and serine 296.

Belongs to the thiolase-like superfamily. Archaeal HMG-CoA synthase family. In terms of assembly, interacts with acetoacetyl-CoA thiolase that catalyzes the precedent step in the pathway and with a DUF35 protein. The acetoacetyl-CoA thiolase/HMG-CoA synthase complex channels the intermediate via a fused CoA-binding site, which allows for efficient coupling of the endergonic thiolase reaction with the exergonic HMGCS reaction.

It carries out the reaction acetoacetyl-CoA + acetyl-CoA + H2O = (3S)-3-hydroxy-3-methylglutaryl-CoA + CoA + H(+). It participates in metabolic intermediate biosynthesis; (R)-mevalonate biosynthesis; (R)-mevalonate from acetyl-CoA: step 2/3. In terms of biological role, catalyzes the condensation of acetyl-CoA with acetoacetyl-CoA to form 3-hydroxy-3-methylglutaryl-CoA (HMG-CoA). Functions in the mevalonate (MVA) pathway leading to isopentenyl diphosphate (IPP), a key precursor for the biosynthesis of isoprenoid compounds that are building blocks of archaeal membrane lipids. The chain is Hydroxymethylglutaryl-CoA synthase from Methanocella arvoryzae (strain DSM 22066 / NBRC 105507 / MRE50).